The sequence spans 752 residues: MSAAEIDEGVFETTATIDNGSFGTRTIRFETGRLALQAAGAVVAYLDDDNMLLSATTASKNPKEHFDFFPLTVDVEERMYAAGRIPGSFFRREGRPSTDAILTCRLIDRPLRPSFVDGLRNEIQIVVTILSLDPGDLYDVLAINAASASTQLGGLPFSGPIGGVRVALIDGTWVGFPTVDQIERAVFDMVVAGRIVEGDVAIMMVEAEATENVVELVEGGAQAPTESVVAAGLEAAKPFIAALCTAQQELADAAGKSGKPTVDFPVFPDYGEDVYYSVSSVATDELAAALTIGGKAERDQRIDEIKTQVVQRLADTYEGREKEVGAALRALTKKLVRQRILTDHFRIDGRGITDIRALSAEVAVVPRAHGSALFERGETQILGVTTLDMIKMAQQIDSLGPETSKRYMHHYNFPPFSTGETGRVGSPKRREIGHGALAERALVPVLPSVEEFPYAIRQVSEALGSNGSTSMGSVCASTLALLNAGVPLKAPVAGIAMGLVSDDIQVEGAVDGVVERRFVTLTDILGAEDAFGDMDFKVAGTKDFVTALQLDTKLDGIPSQVLAGALEQAKDARLTILEVMAEAIDRPDEMSPYAPRVTTIKVPVDKIGEVIGPKGKVINAITEETGAQISIEDDGTVFVGATDGPSAQAAIDKINAIANPQLPTVGERFLGTVVKTTDFGAFVSLLPGRDGLVHISKLGKGKRIAKVEDVVNVGDKLRVEIADIDKRGKISLILVADEDSTAAATDAATVTS.

The Mg(2+) site is built by Asp-529 and Asp-535. The KH domain maps to 595 to 654; the sequence is PRVTTIKVPVDKIGEVIGPKGKVINAITEETGAQISIEDDGTVFVGATDGPSAQAAIDKI. The S1 motif domain maps to 666 to 735; the sequence is GERFLGTVVK…KRGKISLILV (70 aa).

The protein belongs to the polyribonucleotide nucleotidyltransferase family. The cofactor is Mg(2+).

The protein resides in the cytoplasm. It carries out the reaction RNA(n+1) + phosphate = RNA(n) + a ribonucleoside 5'-diphosphate. Functionally, involved in mRNA degradation. Catalyzes the phosphorolysis of single-stranded polyribonucleotides processively in the 3'- to 5'-direction. The protein is Polyribonucleotide nucleotidyltransferase of Mycobacterium tuberculosis (strain ATCC 25177 / H37Ra).